The sequence spans 200 residues: Nucleoside triphosphate pyrophosphatase (200 aa).

Catalysis depends on Asp-79, which acts as the Proton acceptor.

This sequence belongs to the Maf family. Requires a divalent metal cation as cofactor.

The protein localises to the cytoplasm. The enzyme catalyses a ribonucleoside 5'-triphosphate + H2O = a ribonucleoside 5'-phosphate + diphosphate + H(+). It catalyses the reaction a 2'-deoxyribonucleoside 5'-triphosphate + H2O = a 2'-deoxyribonucleoside 5'-phosphate + diphosphate + H(+). In terms of biological role, nucleoside triphosphate pyrophosphatase. May have a dual role in cell division arrest and in preventing the incorporation of modified nucleotides into cellular nucleic acids. In Legionella pneumophila subsp. pneumophila (strain Philadelphia 1 / ATCC 33152 / DSM 7513), this protein is Nucleoside triphosphate pyrophosphatase.